Reading from the N-terminus, the 141-residue chain is ATP synthase epsilon chain (141 aa).

It belongs to the ATPase epsilon chain family. F-type ATPases have 2 components, CF(1) - the catalytic core - and CF(0) - the membrane proton channel. CF(1) has five subunits: alpha(3), beta(3), gamma(1), delta(1), epsilon(1). CF(0) has three main subunits: a, b and c.

It is found in the cell inner membrane. In terms of biological role, produces ATP from ADP in the presence of a proton gradient across the membrane. This is ATP synthase epsilon chain from Burkholderia mallei (strain NCTC 10247).